The primary structure comprises 185 residues: Elongation factor P (185 aa).

The protein belongs to the elongation factor P family.

Its subcellular location is the cytoplasm. The protein operates within protein biosynthesis; polypeptide chain elongation. Its function is as follows. Involved in peptide bond synthesis. Stimulates efficient translation and peptide-bond synthesis on native or reconstituted 70S ribosomes in vitro. Probably functions indirectly by altering the affinity of the ribosome for aminoacyl-tRNA, thus increasing their reactivity as acceptors for peptidyl transferase. The sequence is that of Elongation factor P from Petrotoga mobilis (strain DSM 10674 / SJ95).